A 266-amino-acid polypeptide reads, in one-letter code: Putative carbamate hydrolase RutD (266 aa).

It belongs to the AB hydrolase superfamily. Hydrolase RutD family.

It catalyses the reaction carbamate + 2 H(+) = NH4(+) + CO2. Its function is as follows. Involved in pyrimidine catabolism. May facilitate the hydrolysis of carbamate, a reaction that can also occur spontaneously. In Escherichia coli (strain B / BL21-DE3), this protein is Putative carbamate hydrolase RutD.